Reading from the N-terminus, the 729-residue chain is Fatty acid oxidation complex subunit alpha (729 aa).

The enoyl-CoA hydratase/isomerase stretch occupies residues 1 to 189; the sequence is MLYKGDTLYL…KVGLVDAVVK (189 aa). Residue Asp-296 participates in substrate binding. Positions 311–729 are 3-hydroxyacyl-CoA dehydrogenase; the sequence is ETPKQAAVLG…AQPVGELQTA (419 aa). NAD(+)-binding positions include Met-324, Asp-343, 400–402, Lys-407, and Ser-429; that span reads VVE. Residue His-450 is the For 3-hydroxyacyl-CoA dehydrogenase activity of the active site. Position 453 (Asn-453) interacts with NAD(+). Asn-500 and Tyr-660 together coordinate substrate. Positions 708 to 729 are disordered; the sequence is SHNAPYYPQVEPAQPVGELQTA.

It in the N-terminal section; belongs to the enoyl-CoA hydratase/isomerase family. This sequence in the C-terminal section; belongs to the 3-hydroxyacyl-CoA dehydrogenase family. As to quaternary structure, heterotetramer of two alpha chains (FadB) and two beta chains (FadA).

The catalysed reaction is a (3S)-3-hydroxyacyl-CoA + NAD(+) = a 3-oxoacyl-CoA + NADH + H(+). It carries out the reaction a (3S)-3-hydroxyacyl-CoA = a (2E)-enoyl-CoA + H2O. The enzyme catalyses a 4-saturated-(3S)-3-hydroxyacyl-CoA = a (3E)-enoyl-CoA + H2O. It catalyses the reaction (3S)-3-hydroxybutanoyl-CoA = (3R)-3-hydroxybutanoyl-CoA. The catalysed reaction is a (3Z)-enoyl-CoA = a 4-saturated (2E)-enoyl-CoA. It carries out the reaction a (3E)-enoyl-CoA = a 4-saturated (2E)-enoyl-CoA. Its pathway is lipid metabolism; fatty acid beta-oxidation. In terms of biological role, involved in the aerobic and anaerobic degradation of long-chain fatty acids via beta-oxidation cycle. Catalyzes the formation of 3-oxoacyl-CoA from enoyl-CoA via L-3-hydroxyacyl-CoA. It can also use D-3-hydroxyacyl-CoA and cis-3-enoyl-CoA as substrate. The sequence is that of Fatty acid oxidation complex subunit alpha from Cronobacter sakazakii (strain ATCC BAA-894) (Enterobacter sakazakii).